The primary structure comprises 340 residues: Olfactory receptor 5T3 (340 aa).

The Extracellular portion of the chain corresponds to 1 to 55; sequence MDSTFTGYNLYNLQVKTEMDKLSSGLDIYRNPLKNKTEVTMFILTGFTDDFELQV. A glycan (N-linked (GlcNAc...) asparagine) is linked at N35. Residues 56–76 form a helical membrane-spanning segment; that stretch reads FLFLLFFAIYLFTLIGNLGLV. Residues 77 to 84 lie on the Cytoplasmic side of the membrane; that stretch reads VLVIEDSW. Residues 85–105 traverse the membrane as a helical segment; that stretch reads LHNPMYYFLSVLSFLDACYST. Residues 106 to 129 are Extracellular-facing; the sequence is VVTPKMLVNFLAKNKSISFIGCAT. Residue N119 is glycosylated (N-linked (GlcNAc...) asparagine). C127 and C219 are joined by a disulfide. A helical transmembrane segment spans residues 130–150; that stretch reads QMLLFVTFGTTECFLLAAMAY. Over 151 to 169 the chain is Cytoplasmic; that stretch reads DHYVAIYNPLLYSVSMSPR. A helical membrane pass occupies residues 170-190; that stretch reads VYVPLITASYVAGILHATIHI. Residues 191–226 lie on the Extracellular side of the membrane; that stretch reads VATFSLSFCGSNEIRHVFCDMPPLLAISCSDTHTNQ. The chain crosses the membrane as a helical span at residues 227–247; it reads LLLFYFVGSIEIVTILIVLIS. At 248–267 the chain is on the cytoplasmic side; sequence CDFILLSILKMHSAKGRQKA. A helical transmembrane segment spans residues 268–288; sequence FSTCGSHLTGVTIYHGTILVS. The Extracellular segment spans residues 289 to 301; sequence YMRPSSSYASDHD. A helical transmembrane segment spans residues 302-322; sequence IIVSIFYTIVIPKLNPIIYSL. Residues 323 to 340 lie on the Cytoplasmic side of the membrane; sequence RNKEVKKAVKKMLKLVYK.

Belongs to the G-protein coupled receptor 1 family.

Its subcellular location is the cell membrane. Its function is as follows. Odorant receptor. The chain is Olfactory receptor 5T3 (OR5T3) from Homo sapiens (Human).